We begin with the raw amino-acid sequence, 260 residues long: 3-dehydroquinate dehydratase (260 aa).

3-dehydroquinate contacts are provided by residues 50 to 52 (EWR) and arginine 86. The active-site Proton donor/acceptor is the histidine 148. The Schiff-base intermediate with substrate role is filled by lysine 175. Residues arginine 217, serine 236, and glutamine 240 each coordinate 3-dehydroquinate.

This sequence belongs to the type-I 3-dehydroquinase family. Homodimer.

The catalysed reaction is 3-dehydroquinate = 3-dehydroshikimate + H2O. Its pathway is metabolic intermediate biosynthesis; chorismate biosynthesis; chorismate from D-erythrose 4-phosphate and phosphoenolpyruvate: step 3/7. Its function is as follows. Involved in the third step of the chorismate pathway, which leads to the biosynthesis of aromatic amino acids. Catalyzes the cis-dehydration of 3-dehydroquinate (DHQ) and introduces the first double bond of the aromatic ring to yield 3-dehydroshikimate. This Aromatoleum aromaticum (strain DSM 19018 / LMG 30748 / EbN1) (Azoarcus sp. (strain EbN1)) protein is 3-dehydroquinate dehydratase.